The primary structure comprises 69 residues: Conotoxin Gla-TxXI (69 aa).

Residues 1-25 form the signal peptide; it reads MVRVTSVGCFLLVIVSLNLVVLTNA. Cystine bridges form between cysteine 26–cysteine 40, cysteine 33–cysteine 45, cysteine 39–cysteine 49, and cysteine 44–cysteine 53. Glutamate 29 is modified (4-carboxyglutamate). Proline amide is present on proline 56. Positions 60–69 are excised as a propeptide; that stretch reads AKLLEFFRQR.

In terms of processing, contains 4 disulfide bonds. As to expression, expressed by the venom duct.

It localises to the secreted. The sequence is that of Conotoxin Gla-TxXI from Conus textile (Cloth-of-gold cone).